Here is a 383-residue protein sequence, read N- to C-terminus: tRNA(Met) cytidine acetate ligase (383 aa).

Residues 7–20, Gly101, Asn150, and Arg175 each bind ATP; that span reads ITEY…HRYH.

Belongs to the TmcAL family.

It localises to the cytoplasm. The catalysed reaction is cytidine(34) in elongator tRNA(Met) + acetate + ATP = N(4)-acetylcytidine(34) in elongator tRNA(Met) + AMP + diphosphate. Catalyzes the formation of N(4)-acetylcytidine (ac(4)C) at the wobble position of elongator tRNA(Met), using acetate and ATP as substrates. First activates an acetate ion to form acetyladenylate (Ac-AMP) and then transfers the acetyl group to tRNA to form ac(4)C34. The chain is tRNA(Met) cytidine acetate ligase from Lactiplantibacillus plantarum (strain ATCC BAA-793 / NCIMB 8826 / WCFS1) (Lactobacillus plantarum).